We begin with the raw amino-acid sequence, 226 residues long: tRNA (guanine-N(1)-)-methyltransferase (226 aa).

S-adenosyl-L-methionine-binding positions include Gly-110 and 129–134 (IGDYIL).

This sequence belongs to the RNA methyltransferase TrmD family. In terms of assembly, homodimer.

It localises to the cytoplasm. The catalysed reaction is guanosine(37) in tRNA + S-adenosyl-L-methionine = N(1)-methylguanosine(37) in tRNA + S-adenosyl-L-homocysteine + H(+). Specifically methylates guanosine-37 in various tRNAs. The chain is tRNA (guanine-N(1)-)-methyltransferase from Malacoplasma penetrans (strain HF-2) (Mycoplasma penetrans).